The primary structure comprises 895 residues: MKITEGRFRLSLLLLLLLISAATLISAADYSPTEKILLNCGGGASNLTDTDNRIWISDVKSKFLSSSSEDSKTSPALTQDPSVPEVPYMTARVFRSPFTYTFPVASGRKFVRLYFYPNSYDGLNATNSLFSVSFGPYTLLKNFSASQTAEALTYAFIIKEFVVNVEGGTLNMTFTPESAPSNAYAFVNGIEVTSMPDMYSSTDGTLTMVGSSGSVTIDNSTALENVYRLNVGGNDISPSADTGLYRSWYDDQPYIFGAGLGIPETADPNMTIKYPTGTPTYVAPVDVYSTARSMGPTAQINLNYNLTWIFSIDSGFTYLVRLHFCEVSSNITKINQRVFTIYLNNQTAEPEADVIAWTSSNGVPFHKDYVVNPPEGNGQQDLWLALHPNPVNKPEYYDSLLNGVEIFKMNTSDGNLAGTNPIPGPQVTADPSKVLRPTTRKSKSNTAIIAGAASGAVVLALIIGFCVFGAYRRRKRGDYQPASDATSGWLPLSLYGNSHSAGSAKTNTTGSYASSLPSNLCRHFSFAEIKAATKNFDESRVLGVGGFGKVYRGEIDGGTTKVAIKRGNPMSEQGVHEFQTEIEMLSKLRHRHLVSLIGYCEENCEMILVYDYMAHGTMREHLYKTQNPSLPWKQRLEICIGAARGLHYLHTGAKHTIIHRDVKTTNILLDEKWVAKVSDFGLSKTGPTLDHTHVSTVVKGSFGYLDPEYFRRQQLTEKSDVYSFGVVLFEALCARPALNPTLAKEQVSLAEWAPYCYKKGMLDQIVDPYLKGKITPECFKKFAETAMKCVLDQGIERPSMGDVLWNLEFALQLQESAEENGKGVCGDMDMDEIKYDDGNCKGKNDKSSDVYEGNVTDSRSSGIDMSIGGRSLASEDSDGLTPSAVFSQIMNPKGR.

The signal sequence occupies residues 1–27; that stretch reads MKITEGRFRLSLLLLLLLISAATLISA. Residues 28–447 are Extracellular-facing; it reads ADYSPTEKIL…TTRKSKSNTA (420 aa). Residues N46, N124, N142, N171, N219, N269, N305, N330, N345, and N410 are each glycosylated (N-linked (GlcNAc...) asparagine). A helical transmembrane segment spans residues 448 to 468; it reads IIAGAASGAVVLALIIGFCVF. Residues 469-895 lie on the Cytoplasmic side of the membrane; sequence GAYRRRKRGD…FSQIMNPKGR (427 aa). Residues 536–810 form the Protein kinase domain; the sequence is FDESRVLGVG…GDVLWNLEFA (275 aa). Residues 542–550 and K565 each bind ATP; that span reads LGVGGFGKV. The active-site Proton acceptor is D661. The tract at residues 844–895 is disordered; sequence NDKSSDVYEGNVTDSRSSGIDMSIGGRSLASEDSDGLTPSAVFSQIMNPKGR. Phosphoserine occurs at positions 858, 866, 871, and 874. The segment covering 884 to 895 has biased composition (polar residues); that stretch reads AVFSQIMNPKGR.

This sequence belongs to the protein kinase superfamily. Ser/Thr protein kinase family. In terms of assembly, interacts with ROPGEF1. Interacts with RALF1; triggering phosphorylation status and subsequent activation. Interacts with LRE and LLG1. Interacts, via its extracellular domain, with FERONIA at the synergid cell surface. Post-translationally, autophosphorylated. Phosphorylated at Ser-858, Ser-871 and Ser-874 upon activation by RALF1. In terms of tissue distribution, expressed in leaves, buds, flowers, siliques, young ovules primordia, and young anthers with immature pollen, but not detected in mature pollen. Highest expression in the synergid cells of the female gametophyte.

The protein localises to the cell membrane. It catalyses the reaction L-seryl-[protein] + ATP = O-phospho-L-seryl-[protein] + ADP + H(+). The catalysed reaction is L-threonyl-[protein] + ATP = O-phospho-L-threonyl-[protein] + ADP + H(+). Functionally, receptor-like protein kinase that mediates the female control of male gamete delivery during fertilization, including growth cessation of compatible pollen tubes ensuring a reproductive isolation barriers, by regulating MLO7 subcellular polarization upon pollen tube perception in the female gametophyte synergids. Required for cell elongation during vegetative growth, mostly in a brassinosteroids- (BR-) independent manner. Acts as an upstream regulator for the Rac/Rop-signaling pathway that controls ROS-mediated root hair development. Seems to regulate a cross-talk between brassinosteroids and ethylene signaling pathways during hypocotyl elongation. Negative regulator of brassinosteroid response in light-grown hypocotyls, but required for brassinosteroid response in etiolated seedlings. Mediates sensitivity to powdery mildew (e.g. Golovinomyces orontii). Positive regulator of auxin-promoted growth that represses the abscisic acid (ABA) signaling via the activation of ABI2 phosphatase. Required for RALF1-mediated extracellular alkalinization in a signaling pathway preventing cell expansion. The sequence is that of Receptor-like protein kinase FERONIA from Arabidopsis thaliana (Mouse-ear cress).